Reading from the N-terminus, the 1730-residue chain is SH3 and multiple ankyrin repeat domains protein 3 (1730 aa).

The segment at 1–75 is intramolecular interaction with the ANK repeats; that stretch reads MDGPGASAVV…KFLDEERLLQ (75 aa). Y122 is modified (phosphotyrosine). ANK repeat units lie at residues 148–178, 182–211, 215–245, 249–278, 282–311, and 315–345; these read SGECPLSLAAQLDNATDLLKVLRNGGAHLDF, DGLTAVHCATRQRNAGALTTLLDLGASPDY, RGLTPLYHSALGGGDALCCELLLHDHAQLGT, NGWQEIHQACRFGHVQHLEHLLFYGANMGA, SGNTALHICALYNQESCARVLLFRGANKDV, and NSQTAFQVAIIAGNFELAEVIKTHKDSDVVP. A disordered region spans residues 354–466; sequence KRRRLAGPSG…PPPRGPKRKL (113 aa). Residues S373, S375, S387, and S394 each carry the phosphoserine modification. Residues 404–415 are compositionally biased toward basic and acidic residues; that stretch reads LQEEKDRDRDGE. The span at 444–460 shows a compositional bias: pro residues; it reads APGPGPASPAPPAPPPR. An SH3 domain is found at 470-529; that stretch reads VPGRKFIAVKAHSPQGEGEIPLHRGEAVKVLSIGEGGFWEGTVKGRTGWFPADCVEEVQM. The residue at position 482 (S482) is a Phosphoserine. The residue at position 555 (Y555) is a Phosphotyrosine. The region spanning 570-664 is the PDZ domain; that stretch reads VAILQKRDHE…RLVMKVVSVT (95 aa). The interval 664-688 is disordered; sequence TRKPEEDGARRRAPPPPKRAPSTTL. The interval 677–684 is required for interaction with ABI1; it reads PPPPKRAP. Phosphoserine is present on residues S694, S781, S790, and S801. 2 disordered regions span residues 760–1460 and 1475–1524; these read QGLP…AAGP and GDPV…SLLD. A compositionally biased stretch (pro residues) spans 812 to 844; sequence IPPPPQTAPPPPPAPYYFDSGPPPTFSPPPPPG. Low complexity predominate over residues 857–869; that stretch reads GLEARLGAGAAGL. A phosphoserine mark is found at S890 and S897. The residue at position 912 (T912) is a Phosphothreonine. Y930 bears the Phosphotyrosine mark. An Asymmetric dimethylarginine modification is found at R965. S995 is subject to Phosphoserine. Over residues 1016–1026 the composition is skewed to basic and acidic residues; the sequence is VKERRLEERRR. Residues 1078–1092 are compositionally biased toward low complexity; sequence LKPLVGGPSLGPSGS. A compositionally biased stretch (polar residues) spans 1122-1131; that stretch reads SQTPSRSPTP. A Phosphothreonine modification is found at T1130. A phosphoserine mark is found at S1134, S1159, S1163, and S1166. Positions 1174–1194 are enriched in basic and acidic residues; it reads ARREAEKPPREERKSPEDKKS. At T1234 the chain carries Phosphothreonine. Residues 1235–1250 are compositionally biased toward low complexity; sequence PELAPAPMQAAAVAEP. Composition is skewed to pro residues over residues 1251–1261 and 1321–1333; these read MPSPRAQPPGS and TPPPGPGPLPTTV. At S1253 the chain carries Phosphoserine. Basic and acidic residues predominate over residues 1360–1370; that stretch reads ADTRSSSDPHL. A compositionally biased stretch (low complexity) spans 1371-1392; sequence ETTSTISTVSSMSTLSSESGEL. The SH3-binding motif lies at 1410-1416; sequence PPVPPKP. S1420 is subject to Phosphoserine. Residues 1494-1514 are a coiled coil; the sequence is ISELSSRLQQLNKDTRSLGEE. Over residues 1495–1505 the composition is skewed to polar residues; the sequence is SELSSRLQQLN. A phosphoserine mark is found at S1510, S1521, S1529, and S1539. Disordered regions lie at residues 1546 to 1584 and 1627 to 1663; these read ISAQRSPGGPGGGASYSVRPSGRYPVARRAPSPVKPASL and VRSVSARSRSPSPSPLPSPSPGSGPSAGPRRPFQQKP. Residues 1627 to 1637 show a composition bias toward low complexity; that stretch reads VRSVSARSRSP. 3 positions are modified to phosphoserine: S1634, S1636, and S1638. Over residues 1638-1648 the composition is skewed to pro residues; that stretch reads SPSPLPSPSPG. A compositionally biased stretch (low complexity) spans 1649–1658; that stretch reads SGPSAGPRRP. The SAM domain occupies 1667–1730; sequence WSKFDVGDWL…ERALRQLDGS (64 aa).

It belongs to the SHANK family. May homomultimerize via its SAM domain. Interacts with BAIAP2, DBNL and SLC17A7/VGLUT1. Interacts with DLGAP1/GKAP, GRM1/MGLUR1, GRM5/MGLUR5 and LZTS3 C-termini via its PDZ domain. Interacts with ABI1, HOMER1, HOMER2, HOMER3 and CTTN/cortactin SH3 domain. Is part of a complex with DLG4/PSD-95 and DLGAP1/GKAP. Interacts (via PDZ domain) with the GRIA1 subunit of the AMPA receptor (via PDZ-binding motif). Interacts with WASF1 and CYFIP2; the interactions mediate the association of SHANK3 with the WAVE1 complex. Interacts with ARPC2; the interaction probably mediates the association of SHANK3 with the Arp2/3 complex. Interacts (via ANK repeats) with SHARPIN and SPTAN1. Interacts (via PDZ domain) with ARHGAP44 (probably via PDZ-binding motif); the interaction takes place in dendritic spines and promotes GRIA1 exocytosis. Interacts with CAMK2A. Interacts with DIP2A. Interacts with ADGRL3. In brain, highly expressed in striatum, thalamus, hippocampus and granule cells of the cerebellum.

The protein localises to the cytoplasm. Its subcellular location is the synapse. The protein resides in the postsynaptic density. It localises to the cell projection. It is found in the dendritic spine. Major scaffold postsynaptic density protein which interacts with multiple proteins and complexes to orchestrate the dendritic spine and synapse formation, maturation and maintenance. Interconnects receptors of the postsynaptic membrane including NMDA-type and metabotropic glutamate receptors via complexes with GKAP/PSD-95 and HOMER, respectively, and the actin-based cytoskeleton. Plays a role in the structural and functional organization of the dendritic spine and synaptic junction through the interaction with Arp2/3 and WAVE1 complex as well as the promotion of the F-actin clusters. By way of this control of actin dynamics, participates in the regulation of developing neurons growth cone motility and the NMDA receptor-signaling. Also modulates GRIA1 exocytosis and GRM5/MGLUR5 expression and signaling to control the AMPA and metabotropic glutamate receptor-mediated synaptic transmission and plasticity. May be required at an early stage of synapse formation and be inhibited by IGF1 to promote synapse maturation. This Mus musculus (Mouse) protein is SH3 and multiple ankyrin repeat domains protein 3 (Shank3).